The sequence spans 200 residues: Probable GTP-binding protein EngB (200 aa).

The region spanning 22-199 is the EngB-type G domain; that stretch reads NVAEVAFLGR…QDKITGYLFG (178 aa). Residues 30-37, 57-61, 85-88, 155-158, and 177-180 each bind GTP; these read GRSNVGKS, GKTQL, DLPG, TKID, and FLSN. The Mg(2+) site is built by Ser-37 and Thr-59.

The protein belongs to the TRAFAC class TrmE-Era-EngA-EngB-Septin-like GTPase superfamily. EngB GTPase family. Requires Mg(2+) as cofactor.

In terms of biological role, necessary for normal cell division and for the maintenance of normal septation. In Aliarcobacter butzleri (strain RM4018) (Arcobacter butzleri), this protein is Probable GTP-binding protein EngB.